We begin with the raw amino-acid sequence, 753 residues long: Fatty acid oxidation complex subunit alpha (753 aa).

Residues serine 8–proline 197 are enoyl-CoA hydratase. Positions arginine 313–glutamate 747 are 3-hydroxyacyl-CoA dehydrogenase. Residues serine 593 to tryptophan 622 form a disordered region. Low complexity predominate over residues serine 599–proline 614.

The protein in the N-terminal section; belongs to the enoyl-CoA hydratase/isomerase family. This sequence in the central section; belongs to the 3-hydroxyacyl-CoA dehydrogenase family. As to quaternary structure, heterotetramer of two alpha chains (FadJ) and two beta chains (FadI).

It is found in the cytoplasm. It catalyses the reaction a (3S)-3-hydroxyacyl-CoA = a (2E)-enoyl-CoA + H2O. The enzyme catalyses a 4-saturated-(3S)-3-hydroxyacyl-CoA = a (3E)-enoyl-CoA + H2O. The catalysed reaction is a (3S)-3-hydroxyacyl-CoA + NAD(+) = a 3-oxoacyl-CoA + NADH + H(+). It carries out the reaction (3S)-3-hydroxybutanoyl-CoA = (3R)-3-hydroxybutanoyl-CoA. It functions in the pathway lipid metabolism; fatty acid beta-oxidation. Its function is as follows. Catalyzes the formation of a hydroxyacyl-CoA by addition of water on enoyl-CoA. Also exhibits 3-hydroxyacyl-CoA epimerase and 3-hydroxyacyl-CoA dehydrogenase activities. The chain is Fatty acid oxidation complex subunit alpha from Yersinia pseudotuberculosis serotype I (strain IP32953).